Reading from the N-terminus, the 122-residue chain is Large ribosomal subunit protein uL18 (122 aa).

The protein belongs to the universal ribosomal protein uL18 family. As to quaternary structure, part of the 50S ribosomal subunit; part of the 5S rRNA/L5/L18/L25 subcomplex. Contacts the 5S and 23S rRNAs.

In terms of biological role, this is one of the proteins that bind and probably mediate the attachment of the 5S RNA into the large ribosomal subunit, where it forms part of the central protuberance. The sequence is that of Large ribosomal subunit protein uL18 from Thermosipho melanesiensis (strain DSM 12029 / CIP 104789 / BI429).